A 415-amino-acid chain; its full sequence is Serine--tRNA ligase (415 aa).

Residue 231–233 coordinates L-serine; that stretch reads TAE. 262–264 serves as a coordination point for ATP; the sequence is RSE. Residue Glu285 participates in L-serine binding. Residue 349 to 352 participates in ATP binding; it reads EISS. Residue Ser383 participates in L-serine binding.

It belongs to the class-II aminoacyl-tRNA synthetase family. Type-1 seryl-tRNA synthetase subfamily. Homodimer. The tRNA molecule binds across the dimer.

Its subcellular location is the cytoplasm. It carries out the reaction tRNA(Ser) + L-serine + ATP = L-seryl-tRNA(Ser) + AMP + diphosphate + H(+). The catalysed reaction is tRNA(Sec) + L-serine + ATP = L-seryl-tRNA(Sec) + AMP + diphosphate + H(+). The protein operates within aminoacyl-tRNA biosynthesis; selenocysteinyl-tRNA(Sec) biosynthesis; L-seryl-tRNA(Sec) from L-serine and tRNA(Sec): step 1/1. In terms of biological role, catalyzes the attachment of serine to tRNA(Ser). Is also able to aminoacylate tRNA(Sec) with serine, to form the misacylated tRNA L-seryl-tRNA(Sec), which will be further converted into selenocysteinyl-tRNA(Sec). This chain is Serine--tRNA ligase, found in Helicobacter pylori (strain Shi470).